Reading from the N-terminus, the 78-residue chain is MQFKKQLMVIFLAYFLVVNESEAFFGHLFKLATKIIPSLFRRKNQRSRSIMKRDLENLFDPYQRNLELDRLLKQLPNY.

Positions 1-23 are cleaved as a signal peptide; it reads MQFKKQLMVIFLAYFLVVNESEA. Position 41 is an arginine amide (R41). The propeptide occupies 42–78; that stretch reads RKNQRSRSIMKRDLENLFDPYQRNLELDRLLKQLPNY.

Belongs to the non-disulfide-bridged peptide (NDBP) superfamily. Medium-length antimicrobial peptide (group 3) family. Expressed by the venom gland.

It localises to the secreted. It is found in the target cell membrane. Its function is as follows. Antimicrobial peptide with potent activity against bacteria. Acts by fastly disrupting the bacterial membrane. Shows activity against Gram-positive bacteria S.aureus (MIC=1.5-2.9 uM) and S.epidermidis (MIC=2.9 uM), M.luteus (MIC=23.4 uM), B.thuringiensis (MIC=2.9 uM), B.subtilis (MIC=2.9 uM) and Gram-negative bacteria E.coli (MIC=5.9-11.7 uM) and P.aeruginosa (MIC=5.9 uM), as well as against penicillin (MIC=2.9 uM) and methicillin (MIC=1.5-2.9 uM) resistant bacteria. Antibiotic activity is not affected by major negatively charged components of the prokaryotic cell wall (e.g. lipopolysaccharides and lipoteichoic acid). In vivo, in a mouse model of lethal peritonitis, shows potent antibiotic activity without cytotoxicity, improving the survival rate. This is Antimicrobial peptide marcin-18 from Olivierus martensii (Manchurian scorpion).